We begin with the raw amino-acid sequence, 347 residues long: 3',5'-bisphosphate nucleotidase 2 (347 aa).

D46 serves as the catalytic Proton acceptor. E71, D134, I136, and D137 together coordinate Mg(2+). The Proton acceptor role is filled by T139. Residues T139, S255, K258, R272, and D284 each coordinate adenosine 3',5'-bisphosphate. AMP is bound by residues S255, K258, R272, and D284. D284 is a Mg(2+) binding site.

The protein belongs to the inositol monophosphatase superfamily. It depends on Mg(2+) as a cofactor. Very low expression in roots, leaves, stems, flowers and siliques.

The catalysed reaction is adenosine 3',5'-bisphosphate + H2O = AMP + phosphate. It catalyses the reaction 3'-phosphoadenylyl sulfate + H2O = adenosine 5'-phosphosulfate + phosphate. It carries out the reaction 1D-myo-inositol 1,4-bisphosphate + H2O = 1D-myo-inositol 4-phosphate + phosphate. It functions in the pathway signal transduction; phosphatidylinositol signaling pathway. Its activity is regulated as follows. Inhibited by Li(+) (IC(50)=10 mM), Na(+) (IC(50)=200 mM) and Ca(2+) (IC(50)=0.03 mM). In terms of biological role, phosphatase that converts adenosine 3'-phosphate 5'-phosphosulfate (PAPS) to adenosine 5'-phosphosulfate (APS) and 3'-phosphoadenosine 5'-phosphate (3'-PAP) to AMP. May regulate the flux of sulfur in the sulfur-activation pathway by converting PAPS to APS. Prevents both the toxicity of PAP on RNA processing enzymes as well as the product inhibition by PAP of sulfate conjugation. Is also able to hydrolyze inositol 1,4-bisphosphate. The sequence is that of 3',5'-bisphosphate nucleotidase 2 from Arabidopsis thaliana (Mouse-ear cress).